A 46-amino-acid polypeptide reads, in one-letter code: Succinate dehydrogenase subunit 8, mitochondrial (46 aa).

Component of complex II composed of eight subunits in plants: four classical SDH subunits SDH1, SDH2, SDH3 and SDH4 (a flavoprotein (FP), an iron-sulfur protein (IP), and a cytochrome b composed of a large and a small subunit.), as well as four subunits unknown in mitochondria from bacteria and heterotrophic eukaryotes.

The protein localises to the mitochondrion inner membrane. It participates in carbohydrate metabolism; tricarboxylic acid cycle. The chain is Succinate dehydrogenase subunit 8, mitochondrial from Arabidopsis thaliana (Mouse-ear cress).